The chain runs to 443 residues: Glucose-6-phosphate isomerase (443 aa).

The active-site Proton donor is glutamate 285. Residues histidine 306 and lysine 420 contribute to the active site.

The protein belongs to the GPI family.

The protein localises to the cytoplasm. The enzyme catalyses alpha-D-glucose 6-phosphate = beta-D-fructose 6-phosphate. Its pathway is carbohydrate biosynthesis; gluconeogenesis. It participates in carbohydrate degradation; glycolysis; D-glyceraldehyde 3-phosphate and glycerone phosphate from D-glucose: step 2/4. Its function is as follows. Catalyzes the reversible isomerization of glucose-6-phosphate to fructose-6-phosphate. The sequence is that of Glucose-6-phosphate isomerase from Staphylococcus aureus (strain Mu3 / ATCC 700698).